Here is a 354-residue protein sequence, read N- to C-terminus: Glutaminyl-peptide cyclotransferase (354 aa).

The transit peptide at 1–8 (MRLLLRNY) directs the protein to the mitochondrion. Cysteines 136 and 158 form a disulfide. Aspartate 153 is a binding site for Zn(2+). Glutamate 190 (proton acceptor) is an active-site residue. Glutamate 191 is a binding site for Zn(2+). The Proton acceptor role is filled by aspartate 228. Histidine 318 lines the Zn(2+) pocket.

Belongs to the glutaminyl-peptide cyclotransferase family.

The protein localises to the secreted. Its subcellular location is the mitochondrion. It carries out the reaction N-terminal L-glutaminyl-[peptide] = N-terminal 5-oxo-L-prolyl-[peptide] + NH4(+). With respect to regulation, inhibited by imidazoles (imidazole, benzimidazole, 1-benzylimidazole, 1-methylimidazole, P150/03 and N-omega-acetylhistamine) and cysteamines (cysteamine and N-dimethylcysteamine). Inhibited by PDB50 1(3,4-dimethoxyphenyl)-3-(3-imidazol-1-ylpropyl)thiourea. Its function is as follows. Acts as a glutaminyl-peptide cyclotransferase. Responsible for the biosynthesis of pyroglutamyl peptides. Might be more efficient in the conversion of tri and tetrapeptides in vitro. Might have a relative preference for substrates containing hydrophobic amino acids in vitro. The polypeptide is Glutaminyl-peptide cyclotransferase (Drosophila melanogaster (Fruit fly)).